The chain runs to 89 residues: uncharacterized protein (89 aa).

A signal peptide spans 1–19; sequence MQLTKTQFVRCVFLLLANS.

This is an uncharacterized protein from Sulfolobus islandicus filamentous virus (isolate Iceland/Hveragerdi) (SIFV).